We begin with the raw amino-acid sequence, 1323 residues long: Phosphoribosylformylglycinamidine synthase (1323 aa).

Residues 312-323 (GAATGSGGEIRD), 391-393 (NGY), and Ala-691 each bind ATP. Asp-692, Glu-733, Asn-737, and Asp-903 together coordinate Mg(2+). Ser-905 contacts ATP. A Glutamine amidotransferase type-1 domain is found at 1062–1306 (VAILREQGVN…YPHSKASEWG (245 aa)). Catalysis depends on Cys-1156, which acts as the Nucleophile. Active-site residues include His-1284 and Glu-1286.

The protein in the N-terminal section; belongs to the FGAMS family.

The protein resides in the cytoplasm. It carries out the reaction N(2)-formyl-N(1)-(5-phospho-beta-D-ribosyl)glycinamide + L-glutamine + ATP + H2O = 2-formamido-N(1)-(5-O-phospho-beta-D-ribosyl)acetamidine + L-glutamate + ADP + phosphate + H(+). The protein operates within purine metabolism; IMP biosynthesis via de novo pathway; 5-amino-1-(5-phospho-D-ribosyl)imidazole from N(2)-formyl-N(1)-(5-phospho-D-ribosyl)glycinamide: step 1/2. In terms of biological role, phosphoribosylformylglycinamidine synthase involved in the purines biosynthetic pathway. Catalyzes the ATP-dependent conversion of formylglycinamide ribonucleotide (FGAR) and glutamine to yield formylglycinamidine ribonucleotide (FGAM) and glutamate. The protein is Phosphoribosylformylglycinamidine synthase (ade3) of Schizosaccharomyces pombe (strain 972 / ATCC 24843) (Fission yeast).